The following is an 847-amino-acid chain: Endo-beta-N-acetylglucosaminidase EndoSd (847 aa).

A signal peptide spans 1–36; sequence MDKRLLVKRTLGCVCAATLMGAILATHHDSLISVKA. The 313-residue stretch at 65–377 folds into the GH18 domain; sequence PLYAGYFRTW…HPVVDNISHT (313 aa). His107 provides a ligand contact to a glycoprotein. Glu186 acts as the Proton donor in catalysis. A glycoprotein-binding residues include Glu188, Gln250, Tyr252, Glu288, Glu289, Asn295, and Tyr339. LRR repeat units follow at residues 423-446, 447-470, 483-506, and 507-530; these read LERY…LEKL, SHLQ…ILPE, MTGL…DVNG, and LTHL…ADRK. The tract at residues 683–836 is carbohydrate-binding module (CBM); the sequence is MENLAKGAKV…YTELQILGQR (154 aa). Ca(2+) is bound by residues Lys704, Asp707, and Glu829.

It belongs to the glycosyl hydrolase 18 family.

Its subcellular location is the secreted. It is found in the host extracellular space. The enzyme catalyses an N(4)-(oligosaccharide-(1-&gt;3)-[oligosaccharide-(1-&gt;6)]-beta-D-Man-(1-&gt;4)-beta-D-GlcNAc-(1-&gt;4)-alpha-D-GlcNAc)-L-asparaginyl-[protein] + H2O = an oligosaccharide-(1-&gt;3)-[oligosaccharide-(1-&gt;6)]-beta-D-Man-(1-&gt;4)-D-GlcNAc + N(4)-(N-acetyl-beta-D-glucosaminyl)-L-asparaginyl-[protein]. Its function is as follows. Endoglucosidase that acts as a host immune evasion factor by mediating hydrolysis of the N-linked glycan from the Fc region of host immunoglobulin-gamma (IgG) during infection. Specifically catalyzes the hydrolysis of the beta-1,4 linkage between the first two N-acetylglucosamine residues of the complex-type N-linked glycan located on 'Asn-297' of the Fc region of IgG antibodies (IGHG1, IGHG2, IGHG3 or IGHG4), thereby preventing interaction between IgGs and Fc receptors and ability to activate the complement pathway. Shows a specificity for biantennary complex type N-glycans; does neither cleave larger complex type glycans nor oligomannose and nor hybrid-type glycans. Specifically acts on IgGs; does not act on immunoglobulin alpha, beta, delta or mu. The protein is Endo-beta-N-acetylglucosaminidase EndoSd of Streptococcus dysgalactiae.